We begin with the raw amino-acid sequence, 264 residues long: 5'-nucleotidase SurE (264 aa).

Positions 9, 10, 40, and 95 each coordinate a divalent metal cation.

Belongs to the SurE nucleotidase family. It depends on a divalent metal cation as a cofactor.

Its subcellular location is the cytoplasm. It carries out the reaction a ribonucleoside 5'-phosphate + H2O = a ribonucleoside + phosphate. Functionally, nucleotidase that shows phosphatase activity on nucleoside 5'-monophosphates. The sequence is that of 5'-nucleotidase SurE from Helicobacter hepaticus (strain ATCC 51449 / 3B1).